A 354-amino-acid polypeptide reads, in one-letter code: uncharacterized protein (354 aa).

The chain crosses the membrane as a helical span at residues 43 to 63; it reads LIAVTLWSCVGSLLFICLLAV.

The protein localises to the cell membrane. This is an uncharacterized protein from Bacillus subtilis (strain 168).